Reading from the N-terminus, the 269-residue chain is Glutamate racemase (269 aa).

Substrate-binding positions include 14–15 (DS) and 46–47 (YS). The Proton donor/acceptor role is filled by C78. 79-80 (NT) is a binding site for substrate. C189 serves as the catalytic Proton donor/acceptor. 190-191 (TH) lines the substrate pocket.

This sequence belongs to the aspartate/glutamate racemases family.

It carries out the reaction L-glutamate = D-glutamate. Its pathway is cell wall biogenesis; peptidoglycan biosynthesis. Functionally, provides the (R)-glutamate required for cell wall biosynthesis. The chain is Glutamate racemase from Haemophilus influenzae (strain 86-028NP).